A 119-amino-acid chain; its full sequence is Holo-[acyl-carrier-protein] synthase (119 aa).

Aspartate 8 and glutamate 58 together coordinate Mg(2+).

It belongs to the P-Pant transferase superfamily. AcpS family. Mg(2+) serves as cofactor.

It is found in the cytoplasm. The catalysed reaction is apo-[ACP] + CoA = holo-[ACP] + adenosine 3',5'-bisphosphate + H(+). Functionally, transfers the 4'-phosphopantetheine moiety from coenzyme A to a Ser of acyl-carrier-protein. The sequence is that of Holo-[acyl-carrier-protein] synthase from Bacillus cereus (strain B4264).